We begin with the raw amino-acid sequence, 309 residues long: Glutaminase (309 aa).

Substrate-binding residues include Ser-64, Asn-114, Glu-160, Asn-167, Tyr-191, Tyr-243, and Val-261.

The protein belongs to the glutaminase family. In terms of assembly, homotetramer.

It carries out the reaction L-glutamine + H2O = L-glutamate + NH4(+). This chain is Glutaminase, found in Rhodopseudomonas palustris (strain BisB18).